Here is a 98-residue protein sequence, read N- to C-terminus: SPbeta prophage-derived uncharacterized protein YorB (98 aa).

This chain is SPbeta prophage-derived uncharacterized protein YorB (yorB), found in Bacillus subtilis (strain 168).